We begin with the raw amino-acid sequence, 443 residues long: Methyl-coenzyme M reductase subunit beta (443 aa).

Residue Y367 participates in coenzyme M binding. G369 lines the coenzyme B pocket.

This sequence belongs to the methyl-coenzyme M reductase beta subunit family. In terms of assembly, MCR is a hexamer of two alpha, two beta, and two gamma chains, forming a dimer of heterotrimers. Coenzyme F430 serves as cofactor.

It localises to the cytoplasm. It carries out the reaction coenzyme B + methyl-coenzyme M = methane + coenzyme M-coenzyme B heterodisulfide. Its pathway is one-carbon metabolism; methyl-coenzyme M reduction; methane from methyl-coenzyme M: step 1/1. Functionally, component of the methyl-coenzyme M reductase (MCR) I that catalyzes the reductive cleavage of methyl-coenzyme M (CoM-S-CH3 or 2-(methylthio)ethanesulfonate) using coenzyme B (CoB or 7-mercaptoheptanoylthreonine phosphate) as reductant which results in the production of methane and the mixed heterodisulfide of CoB and CoM (CoM-S-S-CoB). This is the final step in methanogenesis. This is Methyl-coenzyme M reductase subunit beta (mcrB) from Methanococcus voltae.